The following is a 1091-amino-acid chain: Rho GTPase-activating protein 7 (1091 aa).

Residues 11–78 (LTQIEAKEAC…LNKCAVMKLE (68 aa)) form the SAM domain. A phosphoserine mark is found at Ser86, Ser89, and Ser320. The segment at 273–447 (QLNCVEISAL…RLSIYDNVPG (175 aa)) is focal adhesion-targeting (FAT). 3 disordered regions span residues 292–327 (VRKR…RTRS), 382–439 (PKAL…SSRL), and 491–553 (SDEG…GVGA). Composition is skewed to low complexity over residues 297-323 (VSNS…SPVT) and 386-400 (SNGS…SSVN). The span at 414–425 (LRRENSSDSPKE) shows a compositional bias: basic and acidic residues. The span at 499 to 511 (ALDSVSPCPSSPK) shows a compositional bias: polar residues. The span at 513-523 (IHLDVDNDRAT) shows a compositional bias: basic and acidic residues. Residues 526 to 535 (DLDSTGNSLN) show a composition bias toward polar residues. Residues 614-636 (KHGFSWAVPKFMKRIKVPDYKDR) form a polybasic cluster (PBR) region. The region spanning 641–847 (VPLTVNVQRT…HMIAECKKLF (207 aa)) is the Rho-GAP domain. One can recognise an START domain in the interval 877 to 1084 (RNDESADYQH…RDSFSNQNTE (208 aa)).

In terms of assembly, interacts with EF1A1, facilitates EF1A1 distribution to the membrane periphery and ruffles upon growth factor stimulation and suppresses cell migration. Interacts with tensin TNS1 (via N-terminus); the interaction is decreased by phosphorylation of TNS1. Interacts with TNS3 and PTEN; in resting cells, interacts with TNS3 (via C2 tensin-type domain) but, following growth factor stimulation, TNS3 and PTEN are phosphorylated which leads to weakened interaction with TNS3 and enhanced interaction with PTEN. Interacts (via C-terminus) with tensin TNS4 (via SH2 domain); the interaction is independent of tyrosine phosphorylation of DLC1.

It is found in the cytoplasm. It localises to the cell junction. The protein localises to the focal adhesion. The protein resides in the membrane. Functionally, functions as a GTPase-activating protein for the small GTPases RHOA, RHOB, RHOC and CDC42, terminating their downstream signaling. This induces morphological changes and detachment through cytoskeletal reorganization, playing a critical role in biological processes such as cell migration and proliferation. Also functions in vivo as an activator of the phospholipase PLCD1. Active DLC1 increases cell migration velocity but reduces directionality. Required for growth factor-induced epithelial cell migration; in resting cells, interacts with TNS3 while PTEN interacts with the p85 regulatory subunit of the PI3K kinase complex but growth factor stimulation induces phosphorylation of TNS3 and PTEN, causing them to change their binding preference so that PTEN interacts with DLC1 and TNS3 interacts with p85. The PTEN-DLC1 complex translocates to the posterior of migrating cells to activate RHOA while the TNS3-p85 complex translocates to the leading edge of migrating cells to promote RAC1 activation. This Canis lupus familiaris (Dog) protein is Rho GTPase-activating protein 7 (DLC1).